A 295-amino-acid polypeptide reads, in one-letter code: UDP-N-acetylenolpyruvoylglucosamine reductase (295 aa).

Residues 26 to 189 (VGGQADILFK…IEAEFKGVSS (164 aa)) form the FAD-binding PCMH-type domain. R169 is an active-site residue. C218 acts as the Proton donor in catalysis. E288 is a catalytic residue.

This sequence belongs to the MurB family. Requires FAD as cofactor.

It is found in the cytoplasm. The enzyme catalyses UDP-N-acetyl-alpha-D-muramate + NADP(+) = UDP-N-acetyl-3-O-(1-carboxyvinyl)-alpha-D-glucosamine + NADPH + H(+). The protein operates within cell wall biogenesis; peptidoglycan biosynthesis. In terms of biological role, cell wall formation. This Wolbachia sp. subsp. Brugia malayi (strain TRS) protein is UDP-N-acetylenolpyruvoylglucosamine reductase.